The primary structure comprises 261 residues: Glucose 1-dehydrogenase (261 aa).

11-35 (VITGSSTGLGKSMAIRFATEKAKVV) is an NADP(+) binding site. Substrate is bound at residue serine 145. Residue tyrosine 158 is the Proton acceptor of the active site.

This sequence belongs to the short-chain dehydrogenases/reductases (SDR) family. In terms of assembly, homotetramer.

It catalyses the reaction D-glucose + NAD(+) = D-glucono-1,5-lactone + NADH + H(+). The enzyme catalyses D-glucose + NADP(+) = D-glucono-1,5-lactone + NADPH + H(+). The sequence is that of Glucose 1-dehydrogenase from Priestia megaterium (Bacillus megaterium).